We begin with the raw amino-acid sequence, 299 residues long: Oxygen-dependent coproporphyrinogen-III oxidase (299 aa).

Ser92 contacts substrate. Residues His96 and His106 each contribute to the Mn(2+) site. His106 acts as the Proton donor in catalysis. 108–110 (NVR) serves as a coordination point for substrate. Mn(2+) contacts are provided by His145 and His175. The tract at residues 240 to 275 (YVEFNLVWDRGTLFGLQTGGRTESILMSMPPLVRWE) is important for dimerization. 258–260 (GGR) serves as a coordination point for substrate.

The protein belongs to the aerobic coproporphyrinogen-III oxidase family. As to quaternary structure, homodimer. It depends on Mn(2+) as a cofactor.

It localises to the cytoplasm. It catalyses the reaction coproporphyrinogen III + O2 + 2 H(+) = protoporphyrinogen IX + 2 CO2 + 2 H2O. The protein operates within porphyrin-containing compound metabolism; protoporphyrin-IX biosynthesis; protoporphyrinogen-IX from coproporphyrinogen-III (O2 route): step 1/1. Involved in the heme biosynthesis. Catalyzes the aerobic oxidative decarboxylation of propionate groups of rings A and B of coproporphyrinogen-III to yield the vinyl groups in protoporphyrinogen-IX. The polypeptide is Oxygen-dependent coproporphyrinogen-III oxidase (Escherichia coli (strain SE11)).